Here is a 375-residue protein sequence, read N- to C-terminus: 1-deoxy-D-xylulose 5-phosphate reductoisomerase (375 aa).

NADPH-binding residues include Thr12, Gly13, Ser14, Ile15, Asn39, and Asn115. A 1-deoxy-D-xylulose 5-phosphate-binding site is contributed by Lys116. Glu117 lines the NADPH pocket. Mn(2+) is bound at residue Asp141. 1-deoxy-D-xylulose 5-phosphate is bound by residues Ser142, Glu143, Ser163, and His186. Glu143 serves as a coordination point for Mn(2+). Gly192 provides a ligand contact to NADPH. 1-deoxy-D-xylulose 5-phosphate is bound by residues Ser199, Asn204, Lys205, and Glu208. Glu208 serves as a coordination point for Mn(2+).

It belongs to the DXR family. The cofactor is Mg(2+). It depends on Mn(2+) as a cofactor.

It catalyses the reaction 2-C-methyl-D-erythritol 4-phosphate + NADP(+) = 1-deoxy-D-xylulose 5-phosphate + NADPH + H(+). It functions in the pathway isoprenoid biosynthesis; isopentenyl diphosphate biosynthesis via DXP pathway; isopentenyl diphosphate from 1-deoxy-D-xylulose 5-phosphate: step 1/6. Catalyzes the NADPH-dependent rearrangement and reduction of 1-deoxy-D-xylulose-5-phosphate (DXP) to 2-C-methyl-D-erythritol 4-phosphate (MEP). This chain is 1-deoxy-D-xylulose 5-phosphate reductoisomerase, found in Thermotoga neapolitana (strain ATCC 49049 / DSM 4359 / NBRC 107923 / NS-E).